We begin with the raw amino-acid sequence, 437 residues long: Protein translocase subunit SecY (437 aa).

A run of 10 helical transmembrane segments spans residues 19–39, 69–89, 122–142, 157–177, 189–209, 219–239, 275–295, 318–338, 378–398, and 400–420; these read LFTL…IPGV, LLQI…SIIL, VALA…GALF, IFTT…VMWL, GMSI…LWAI, WIEF…VVFV, GVIP…IVQF, HIIL…AISF, GSLY…GFGA, and QNFP…LETV.

Belongs to the SecY/SEC61-alpha family. Component of the Sec protein translocase complex. Heterotrimer consisting of SecY, SecE and SecG subunits. The heterotrimers can form oligomers, although 1 heterotrimer is thought to be able to translocate proteins. Interacts with the ribosome. Interacts with SecDF, and other proteins may be involved. Interacts with SecA.

It localises to the cell membrane. Functionally, the central subunit of the protein translocation channel SecYEG. Consists of two halves formed by TMs 1-5 and 6-10. These two domains form a lateral gate at the front which open onto the bilayer between TMs 2 and 7, and are clamped together by SecE at the back. The channel is closed by both a pore ring composed of hydrophobic SecY resides and a short helix (helix 2A) on the extracellular side of the membrane which forms a plug. The plug probably moves laterally to allow the channel to open. The ring and the pore may move independently. The sequence is that of Protein translocase subunit SecY from Streptomyces coelicolor (strain ATCC BAA-471 / A3(2) / M145).